A 447-amino-acid polypeptide reads, in one-letter code: Argininosuccinate synthase (447 aa).

ATP is bound by residues 20 to 28 (AFSGGLDTS) and A46. Residue Y102 participates in L-citrulline binding. Residues G132 and T134 each coordinate ATP. L-aspartate contacts are provided by T134, N138, and D139. N138 lines the L-citrulline pocket. Position 139 (D139) interacts with ATP. L-citrulline-binding residues include R142 and S195. Position 197 (D197) interacts with ATP. L-citrulline contacts are provided by T204, E206, and E283.

It belongs to the argininosuccinate synthase family. Type 2 subfamily. In terms of assembly, homotetramer.

It localises to the cytoplasm. The catalysed reaction is L-citrulline + L-aspartate + ATP = 2-(N(omega)-L-arginino)succinate + AMP + diphosphate + H(+). The protein operates within amino-acid biosynthesis; L-arginine biosynthesis; L-arginine from L-ornithine and carbamoyl phosphate: step 2/3. This chain is Argininosuccinate synthase, found in Neisseria meningitidis serogroup C (strain 053442).